The sequence spans 383 residues: Succinyl-diaminopimelate desuccinylase (383 aa).

Residue His-79 coordinates Zn(2+). Residue Asp-81 is part of the active site. Asp-110 is a binding site for Zn(2+). The Proton acceptor role is filled by Glu-141. The Zn(2+) site is built by Glu-142, Glu-170, and His-355.

This sequence belongs to the peptidase M20A family. DapE subfamily. As to quaternary structure, homodimer. Zn(2+) serves as cofactor. The cofactor is Co(2+).

It carries out the reaction N-succinyl-(2S,6S)-2,6-diaminopimelate + H2O = (2S,6S)-2,6-diaminopimelate + succinate. Its pathway is amino-acid biosynthesis; L-lysine biosynthesis via DAP pathway; LL-2,6-diaminopimelate from (S)-tetrahydrodipicolinate (succinylase route): step 3/3. Its function is as follows. Catalyzes the hydrolysis of N-succinyl-L,L-diaminopimelic acid (SDAP), forming succinate and LL-2,6-diaminopimelate (DAP), an intermediate involved in the bacterial biosynthesis of lysine and meso-diaminopimelic acid, an essential component of bacterial cell walls. The protein is Succinyl-diaminopimelate desuccinylase of Helicobacter pylori (strain ATCC 700392 / 26695) (Campylobacter pylori).